We begin with the raw amino-acid sequence, 352 residues long: Glycerol-3-phosphate dehydrogenase 1-like protein (352 aa).

NAD(+) is bound at residue 13-18 (GSGNWG). Residue Lys123 participates in substrate binding. Residue Ala156 coordinates NAD(+). Residue Lys207 is the Proton acceptor of the active site. NAD(+)-binding residues include Arg272, Lys299, and Gln301. 272 to 273 (RN) contributes to the substrate binding site.

It belongs to the NAD-dependent glycerol-3-phosphate dehydrogenase family.

The protein localises to the cytoplasm. The catalysed reaction is sn-glycerol 3-phosphate + NAD(+) = dihydroxyacetone phosphate + NADH + H(+). Plays a role in regulating cardiac sodium current. The polypeptide is Glycerol-3-phosphate dehydrogenase 1-like protein (gpd1l) (Xenopus tropicalis (Western clawed frog)).